A 196-amino-acid chain; its full sequence is Small ribosomal subunit protein uS4c (196 aa).

The S4 RNA-binding domain occupies 82-143 (MRLDNILFRL…KQKSKALIQN (62 aa)).

Belongs to the universal ribosomal protein uS4 family. Part of the 30S ribosomal subunit. Contacts protein S5. The interaction surface between S4 and S5 is involved in control of translational fidelity.

It localises to the plastid. Its subcellular location is the chloroplast. Functionally, one of the primary rRNA binding proteins, it binds directly to 16S rRNA where it nucleates assembly of the body of the 30S subunit. In terms of biological role, with S5 and S12 plays an important role in translational accuracy. In Patersonia sp. (strain Lejeune 1997), this protein is Small ribosomal subunit protein uS4c (rps4).